The primary structure comprises 186 residues: Large ribosomal subunit protein uL6 (186 aa).

Belongs to the universal ribosomal protein uL6 family. As to quaternary structure, part of the 50S ribosomal subunit.

In terms of biological role, this protein binds to the 23S rRNA, and is important in its secondary structure. It is located near the subunit interface in the base of the L7/L12 stalk, and near the tRNA binding site of the peptidyltransferase center. The protein is Large ribosomal subunit protein uL6 of Ignicoccus hospitalis (strain KIN4/I / DSM 18386 / JCM 14125).